The following is a 642-amino-acid chain: 1-deoxy-D-xylulose-5-phosphate synthase 2 (642 aa).

Thiamine diphosphate contacts are provided by residues histidine 73 and serine 113–alanine 115. Position 144 (aspartate 144) interacts with Mg(2+). Residues glycine 145–alanine 146, asparagine 174, tyrosine 285, and glutamate 366 contribute to the thiamine diphosphate site. Asparagine 174 serves as a coordination point for Mg(2+).

Belongs to the transketolase family. DXPS subfamily. As to quaternary structure, homodimer. Requires Mg(2+) as cofactor. Thiamine diphosphate serves as cofactor.

It carries out the reaction D-glyceraldehyde 3-phosphate + pyruvate + H(+) = 1-deoxy-D-xylulose 5-phosphate + CO2. Its pathway is metabolic intermediate biosynthesis; 1-deoxy-D-xylulose 5-phosphate biosynthesis; 1-deoxy-D-xylulose 5-phosphate from D-glyceraldehyde 3-phosphate and pyruvate: step 1/1. Functionally, catalyzes the acyloin condensation reaction between C atoms 2 and 3 of pyruvate and glyceraldehyde 3-phosphate to yield 1-deoxy-D-xylulose-5-phosphate (DXP). This Streptomyces coelicolor (strain ATCC BAA-471 / A3(2) / M145) protein is 1-deoxy-D-xylulose-5-phosphate synthase 2.